The sequence spans 164 residues: Large ribosomal subunit protein bL21 (164 aa).

The tract at residues 105-164 (KAPTIGPRAKKEKKVEAAPADGEAPAKKAPAKKAAAKKAAPKAAAKKAPAKKAAPKAKSE) is disordered. Residues 133-164 (APAKKAAAKKAAPKAAAKKAPAKKAAPKAKSE) show a composition bias toward basic residues.

It belongs to the bacterial ribosomal protein bL21 family. As to quaternary structure, part of the 50S ribosomal subunit. Contacts protein L20.

This protein binds to 23S rRNA in the presence of protein L20. This is Large ribosomal subunit protein bL21 from Afipia carboxidovorans (strain ATCC 49405 / DSM 1227 / KCTC 32145 / OM5) (Oligotropha carboxidovorans).